A 430-amino-acid chain; its full sequence is Mannosylglucosylglycerate synthase (430 aa).

This sequence belongs to the glycosyltransferase group 1 family. A divalent metal cation serves as cofactor.

The enzyme catalyses (2R)-2-O-(alpha-D-glucopyranosyl)-glycerate + GDP-alpha-D-mannose = (2R)-2-O-[alpha-D-mannopyranosyl-(1-&gt;2)-alpha-D-glucopyranosyl]-glycerate + GDP + H(+). Involved in the biosynthesis of the compatible solute mannosylglucosylglycerate through a nonphosphorylating pathway. Catalyzes the synthesis of mannosylglucosylglycerate (MGG) from glucosylglycerate (GG) and GDP-mannose. This chain is Mannosylglucosylglycerate synthase, found in Petrotoga mobilis (strain DSM 10674 / SJ95).